Here is a 574-residue protein sequence, read N- to C-terminus: Type II methyltransferase M.PaeR7I (574 aa).

This sequence belongs to the N(4)/N(6)-methyltransferase family. Monomer.

The enzyme catalyses a 2'-deoxyadenosine in DNA + S-adenosyl-L-methionine = an N(6)-methyl-2'-deoxyadenosine in DNA + S-adenosyl-L-homocysteine + H(+). In terms of biological role, a gamma subtype methylase, recognizes the double-stranded sequence 5'-CTCGAG-3', methylates A-5 on both strands, and protects the DNA from cleavage by the PaeR7I endonuclease. In Pseudomonas aeruginosa, this protein is Type II methyltransferase M.PaeR7I (paeR7IM).